The sequence spans 488 residues: Glutamate--tRNA ligase (488 aa).

Residues 12-22 carry the 'HIGH' region motif; it reads PSPTGYMHVGN. Residues cysteine 109, cysteine 111, cysteine 136, and histidine 138 each coordinate Zn(2+). Positions 253–257 match the 'KMSKS' region motif; it reads KLSKR. An ATP-binding site is contributed by lysine 256.

The protein belongs to the class-I aminoacyl-tRNA synthetase family. Glutamate--tRNA ligase type 1 subfamily. In terms of assembly, monomer. The cofactor is Zn(2+).

It is found in the cytoplasm. It catalyses the reaction tRNA(Glu) + L-glutamate + ATP = L-glutamyl-tRNA(Glu) + AMP + diphosphate. Its function is as follows. Catalyzes the attachment of glutamate to tRNA(Glu) in a two-step reaction: glutamate is first activated by ATP to form Glu-AMP and then transferred to the acceptor end of tRNA(Glu). The protein is Glutamate--tRNA ligase of Clostridium tetani (strain Massachusetts / E88).